Here is a 423-residue protein sequence, read N- to C-terminus: Histidine--tRNA ligase (423 aa).

The protein belongs to the class-II aminoacyl-tRNA synthetase family. In terms of assembly, homodimer.

The protein localises to the cytoplasm. The enzyme catalyses tRNA(His) + L-histidine + ATP = L-histidyl-tRNA(His) + AMP + diphosphate + H(+). This chain is Histidine--tRNA ligase, found in Orientia tsutsugamushi (strain Ikeda) (Rickettsia tsutsugamushi).